Here is a 276-residue protein sequence, read N- to C-terminus: Large ribosomal subunit protein uL2 (276 aa).

Residues 210–276 (GRNRHRGIRP…KLIISRRKGK (67 aa)) form a disordered region. Residues 230-240 (DHPHGGGEGKK) are compositionally biased toward basic and acidic residues. A compositionally biased stretch (basic residues) spans 255–276 (KGAKTRRKKASDKLIISRRKGK).

This sequence belongs to the universal ribosomal protein uL2 family. In terms of assembly, part of the 50S ribosomal subunit. Forms a bridge to the 30S subunit in the 70S ribosome.

Its function is as follows. One of the primary rRNA binding proteins. Required for association of the 30S and 50S subunits to form the 70S ribosome, for tRNA binding and peptide bond formation. It has been suggested to have peptidyltransferase activity; this is somewhat controversial. Makes several contacts with the 16S rRNA in the 70S ribosome. In Campylobacter jejuni subsp. jejuni serotype O:6 (strain 81116 / NCTC 11828), this protein is Large ribosomal subunit protein uL2.